A 511-amino-acid polypeptide reads, in one-letter code: Maturase K (511 aa).

The protein belongs to the intron maturase 2 family. MatK subfamily.

Its subcellular location is the plastid. It localises to the chloroplast. Its function is as follows. Usually encoded in the trnK tRNA gene intron. Probably assists in splicing its own and other chloroplast group II introns. The chain is Maturase K from Pistia stratiotes (Water lettuce).